The following is a 73-amino-acid chain: Putative membrane protein insertion efficiency factor (73 aa).

It belongs to the UPF0161 family.

The protein resides in the cell inner membrane. Could be involved in insertion of integral membrane proteins into the membrane. The chain is Putative membrane protein insertion efficiency factor from Dinoroseobacter shibae (strain DSM 16493 / NCIMB 14021 / DFL 12).